We begin with the raw amino-acid sequence, 359 residues long: NAC transcription factor 47 (359 aa).

Residues 10-186 (LPPGFRFHPT…DWVLCRIYKK (177 aa)) enclose the NAC domain. A DNA-binding region spans residues 112-192 (IGIKKALVFY…IYKKSHASLS (81 aa)). 2 disordered regions span residues 147–166 (KRIN…FGDR) and 200–226 (TSNQ…LQND). Over residues 148 to 165 (RINSSRSGGSEVNNNFGD) the composition is skewed to polar residues.

The protein localises to the nucleus. Transcription factor that binds to the promoter of ACO5, an ACC oxidase involved in ethylene biosynthesis. Mediates waterlogging-induced hyponastic leaf movement, and cell expansion in abaxial cells of the basal petiole region, by directly regulating the expression of ACO5. Required for normal seed development and morphology. This chain is NAC transcription factor 47, found in Arabidopsis thaliana (Mouse-ear cress).